Here is an 824-residue protein sequence, read N- to C-terminus: Probable acyl-CoA dehydrogenase IBR3 (824 aa).

G2 carries the post-translational modification N-acetylglycine. Residues 555 to 565 (FAMTEPQVASS), 589 to 591 (WTS), R706, Q776, and 776 to 780 (QVHGA) contribute to the FAD site. A Microbody targeting signal motif is present at residues 822–824 (SKL).

Belongs to the acyl-CoA dehydrogenase family. Requires FAD as cofactor.

Its subcellular location is the peroxisome. The catalysed reaction is a 2,3-saturated acyl-CoA + A = a 2,3-dehydroacyl-CoA + AH2. Functionally, involved with IBR1 and IBR10 in the peroxisomal beta-oxidation of indole-3-butyric acid (IBA) to form indole-3-acetic acid (IAA), a biologically active auxin. May be responsible for catalyzing the first step in IBA-CoA beta-oxidation. May play a role in defense response to pathogenic bacteria. In Arabidopsis thaliana (Mouse-ear cress), this protein is Probable acyl-CoA dehydrogenase IBR3.